The sequence spans 407 residues: Peptidase T (407 aa).

His82 provides a ligand contact to Zn(2+). Residue Asp84 is part of the active site. Asp143 serves as a coordination point for Zn(2+). The active-site Proton acceptor is Glu177. Glu178, Asp200, and His382 together coordinate Zn(2+).

This sequence belongs to the peptidase M20B family. The cofactor is Zn(2+).

It is found in the cytoplasm. The catalysed reaction is Release of the N-terminal residue from a tripeptide.. In terms of biological role, cleaves the N-terminal amino acid of tripeptides. The sequence is that of Peptidase T from Streptococcus pyogenes serotype M4 (strain MGAS10750).